The primary structure comprises 334 residues: Large ribosomal subunit protein uL3 (334 aa).

Residues 1-10 (MGMKKNRPRR) are compositionally biased toward basic residues. Positions 1-21 (MGMKKNRPRRGSLAFSPRKRA) are disordered.

Belongs to the universal ribosomal protein uL3 family. As to quaternary structure, part of the 50S ribosomal subunit. Forms a cluster with proteins L14 and L24e.

One of the primary rRNA binding proteins, it binds directly near the 3'-end of the 23S rRNA, where it nucleates assembly of the 50S subunit. The polypeptide is Large ribosomal subunit protein uL3 (Methanococcus maripaludis (strain C5 / ATCC BAA-1333)).